The primary structure comprises 279 residues: Methyltransferase prhM (279 aa).

S-adenosyl-L-methionine contacts are provided by residues 124 to 125 and 152 to 153; these read DI and DV.

It belongs to the class I-like SAM-binding methyltransferase superfamily.

It functions in the pathway secondary metabolite biosynthesis; terpenoid biosynthesis. Methyltransferase; part of the gene cluster that mediates the biosynthesis of paraherquonin, a meroterpenoid with a unique, highly congested hexacyclic molecular architecture. The first step of the pathway is the synthesis of 3,5-dimethylorsellinic acid (DMOA) by the polyketide synthase prhL. Synthesis of DMOA is followed by farnesylation by the prenyltransferase prhE, methylesterification by the methyl-transferase prhM, epoxidation of the prenyl chain by the flavin-dependent monooxygenase prhF, and cyclization of the farnesyl moiety by the terpene cyclase prhH, to yield the tetracyclic intermediate, protoaustinoid A. The short chain dehydrogenase prhI then oxidizes the C-3 alcohol group of the terpene cyclase product to transform protoaustinoid A into protoaustinoid B. The FAD-binding monooxygenase prhJ catalyzes the oxidation of protoaustinoid B into preaustinoid A which is further oxidized into preaustinoid A1 by FAD-binding monooxygenase phrK. Finally, prhA leads to berkeleydione via the berkeleyone B intermediate. PrhA is a multifunctional dioxygenase that first desaturates at C5-C6 to form berkeleyone B, followed by rearrangement of the A/B-ring to form the cycloheptadiene moiety in berkeleydione. Berkeleydione serves as the key intermediate for the biosynthesis of paraherquonin as well as many other meroterpenoids. The cytochrome P450 monooxygenases prhB, prhD, and prhN, as well as the isomerase prhC, are probably involved in the late stage of paraherquonin biosynthesis, after the production of berkeleydione. Especially prhC might be a multifunctional enzyme that catalyzes the D-ring expansion via intramolecular methoxy rearrangement, as well as the hydrolysis of the expanded D-ring. In Penicillium brasilianum, this protein is Methyltransferase prhM.